Here is a 224-residue protein sequence, read N- to C-terminus: Orotate phosphoribosyltransferase (224 aa).

Lys-29 is a 5-phospho-alpha-D-ribose 1-diphosphate binding site. 37–38 (FF) contributes to the orotate binding site. 5-phospho-alpha-D-ribose 1-diphosphate contacts are provided by residues 75–76 (YK), Arg-105, Lys-106, Lys-109, His-111, and 130–138 (DDVITAGTS). The orotate site is built by Thr-134 and Arg-162.

Belongs to the purine/pyrimidine phosphoribosyltransferase family. PyrE subfamily. In terms of assembly, homodimer. Requires Mg(2+) as cofactor.

The enzyme catalyses orotidine 5'-phosphate + diphosphate = orotate + 5-phospho-alpha-D-ribose 1-diphosphate. The protein operates within pyrimidine metabolism; UMP biosynthesis via de novo pathway; UMP from orotate: step 1/2. Catalyzes the transfer of a ribosyl phosphate group from 5-phosphoribose 1-diphosphate to orotate, leading to the formation of orotidine monophosphate (OMP). The chain is Orotate phosphoribosyltransferase from Bordetella parapertussis (strain 12822 / ATCC BAA-587 / NCTC 13253).